Reading from the N-terminus, the 430-residue chain is Probable histidine--tRNA ligase, cytoplasmic (430 aa).

It belongs to the class-II aminoacyl-tRNA synthetase family.

It localises to the cytoplasm. It carries out the reaction tRNA(His) + L-histidine + ATP = L-histidyl-tRNA(His) + AMP + diphosphate + H(+). The sequence is that of Probable histidine--tRNA ligase, cytoplasmic from Vairimorpha ceranae (strain BRL01) (Microsporidian parasite).